Here is a 508-residue protein sequence, read N- to C-terminus: Photosystem II CP47 reaction center protein (508 aa).

Transmembrane regions (helical) follow at residues 21–36, 101–115, 140–156, 203–218, 237–252, and 457–472; these read AVHL…WAGS, IVLS…VWHW, GIHL…FGAF, IAAG…FHLT, VLSS…AFVV, and SFAL…HGSR.

It belongs to the PsbB/PsbC family. PsbB subfamily. PSII is composed of 1 copy each of membrane proteins PsbA, PsbB, PsbC, PsbD, PsbE, PsbF, PsbH, PsbI, PsbJ, PsbK, PsbL, PsbM, PsbT, PsbX, PsbY, PsbZ, Psb30/Ycf12, peripheral proteins PsbO, CyanoQ (PsbQ), PsbU, PsbV and a large number of cofactors. It forms dimeric complexes. Requires Binds multiple chlorophylls. PSII binds additional chlorophylls, carotenoids and specific lipids. as cofactor.

It localises to the cellular thylakoid membrane. Its function is as follows. One of the components of the core complex of photosystem II (PSII). It binds chlorophyll and helps catalyze the primary light-induced photochemical processes of PSII. PSII is a light-driven water:plastoquinone oxidoreductase, using light energy to abstract electrons from H(2)O, generating O(2) and a proton gradient subsequently used for ATP formation. This is Photosystem II CP47 reaction center protein from Synechococcus elongatus (strain ATCC 33912 / PCC 7942 / FACHB-805) (Anacystis nidulans R2).